The following is a 164-amino-acid chain: Phosphopantetheine adenylyltransferase (164 aa).

Substrate is bound at residue S9. Residues 9–10 (SF) and H17 contribute to the ATP site. 3 residues coordinate substrate: K41, V78, and R92. Residues 93–95 (GLR), E103, and 128–134 (SRPITAT) contribute to the ATP site.

The protein belongs to the bacterial CoaD family. As to quaternary structure, homohexamer. Requires Mg(2+) as cofactor.

Its subcellular location is the cytoplasm. The catalysed reaction is (R)-4'-phosphopantetheine + ATP + H(+) = 3'-dephospho-CoA + diphosphate. It functions in the pathway cofactor biosynthesis; coenzyme A biosynthesis; CoA from (R)-pantothenate: step 4/5. Its function is as follows. Reversibly transfers an adenylyl group from ATP to 4'-phosphopantetheine, yielding dephospho-CoA (dPCoA) and pyrophosphate. This is Phosphopantetheine adenylyltransferase from Sinorhizobium fredii (strain NBRC 101917 / NGR234).